Reading from the N-terminus, the 271-residue chain is Uridine-cytidine kinase 1-B (271 aa).

G24–T32 is an ATP binding site. D81, Y109, H114, R163, R172, and Q180 together coordinate substrate. Residue D209 participates in ATP binding. The disordered stretch occupies residues R240–H271. Over residues L246 to G259 the composition is skewed to low complexity. The segment covering T262–H271 has biased composition (basic and acidic residues).

Belongs to the uridine kinase family.

It catalyses the reaction uridine + ATP = UMP + ADP + H(+). The catalysed reaction is cytidine + ATP = CMP + ADP + H(+). The protein operates within pyrimidine metabolism; CTP biosynthesis via salvage pathway; CTP from cytidine: step 1/3. Its pathway is pyrimidine metabolism; UMP biosynthesis via salvage pathway; UMP from uridine: step 1/1. Its function is as follows. Phosphorylates uridine and cytidine to uridine monophosphate and cytidine monophosphate. Does not phosphorylate deoxyribonucleosides or purine ribonucleosides. Can use ATP or GTP as a phosphate donor. In Xenopus laevis (African clawed frog), this protein is Uridine-cytidine kinase 1-B (uck1-b).